Reading from the N-terminus, the 196-residue chain is uncharacterized protein (196 aa).

Residues 26-46 form a helical membrane-spanning segment; the sequence is ITFFFILLICFICILLLLAIF.

The protein resides in the membrane. This is an uncharacterized protein from Mus musculus (Mouse).